The chain runs to 318 residues: Aldehyde oxidoreductase FAD-binding subunit PaoB (318 aa).

In terms of domain architecture, FAD-binding PCMH-type spans 1 to 223; the sequence is MKAFTYERVN…VAVTLPPPLG (223 aa). FAD-binding positions include 26–34 and threonine 108; that span reads KFIAGGTNL. Residues cysteine 119, cysteine 129, cysteine 138, and cysteine 157 each coordinate [4Fe-4S] cluster. 3 residues coordinate FAD: aspartate 164, isoleucine 213, and lysine 230.

In terms of assembly, heterotrimer composed of PaoA, PaoB and PaoC. FAD is required as a cofactor. The cofactor is [4Fe-4S] cluster.

Its subcellular location is the periplasm. The enzyme catalyses an aldehyde + A + H2O = a carboxylate + AH2 + H(+). Its activity is regulated as follows. The complex requires PaoD for activity. In terms of biological role, oxidizes aldehydes to the corresponding carboxylic acids with a preference for aromatic aldehydes. It might play a role in the detoxification of aldehydes to avoid cell damage. The sequence is that of Aldehyde oxidoreductase FAD-binding subunit PaoB from Escherichia coli (strain K12).